Here is a 457-residue protein sequence, read N- to C-terminus: tRNA modification GTPase MnmE (457 aa).

(6S)-5-formyl-5,6,7,8-tetrahydrofolate is bound by residues Arg22, Glu83, and Arg122. Positions 219-378 constitute a TrmE-type G domain; it reads GLATAIIGRP…LEEAIKALFF (160 aa). Residue Asn229 coordinates K(+). GTP is bound by residues 229-234, 248-254, and 273-276; these read NVGKSS, TDIAGTT, and DTAG. Ser233 serves as a coordination point for Mg(2+). K(+)-binding residues include Thr248, Ile250, and Thr253. Thr254 is a binding site for Mg(2+). Lys457 is a (6S)-5-formyl-5,6,7,8-tetrahydrofolate binding site.

The protein belongs to the TRAFAC class TrmE-Era-EngA-EngB-Septin-like GTPase superfamily. TrmE GTPase family. Homodimer. Heterotetramer of two MnmE and two MnmG subunits. Requires K(+) as cofactor.

The protein resides in the cytoplasm. Its function is as follows. Exhibits a very high intrinsic GTPase hydrolysis rate. Involved in the addition of a carboxymethylaminomethyl (cmnm) group at the wobble position (U34) of certain tRNAs, forming tRNA-cmnm(5)s(2)U34. This Listeria innocua serovar 6a (strain ATCC BAA-680 / CLIP 11262) protein is tRNA modification GTPase MnmE.